A 435-amino-acid chain; its full sequence is Methanethiol oxidase (435 aa).

Positions 1–24 (MKKHLLAGACALAMGFAVIPGTFA) are cleaved as a signal peptide.

The protein belongs to the selenium-binding protein family. Homotetramer. It depends on Cu cation as a cofactor.

Its subcellular location is the periplasm. The catalysed reaction is methanethiol + O2 + H2O = hydrogen sulfide + formaldehyde + H2O2 + H(+). It participates in organosulfur degradation. Inhibited by EDTA but not by EGTA. Functionally, catalyzes the oxidation of methanethiol. Can also degrade ethanethiol, but not methanol, methylamine or dimethylsulfide. The protein is Methanethiol oxidase of Hyphomicrobium sp.